The sequence spans 678 residues: Exoribonuclease 2 (678 aa).

One can recognise an RNB domain in the interval 193-521 (REDLTALPFV…INHRLLKAHI (329 aa)). The S1 motif domain occupies 568 to 650 (ETRFQAEIFD…ENRSLVGKPT (83 aa)). The disordered stretch occupies residues 658-678 (SETQTSTEQPAEGAENNEPQA).

Belongs to the RNR ribonuclease family. RNase II subfamily.

The protein localises to the cytoplasm. The catalysed reaction is Exonucleolytic cleavage in the 3'- to 5'-direction to yield nucleoside 5'-phosphates.. Involved in mRNA degradation. Hydrolyzes single-stranded polyribonucleotides processively in the 3' to 5' direction. This chain is Exoribonuclease 2, found in Vibrio cholerae serotype O1 (strain ATCC 39541 / Classical Ogawa 395 / O395).